The following is a 173-amino-acid chain: Photosystem I assembly protein Ycf3 (173 aa).

TPR repeat units follow at residues alanine 35–proline 68, serine 72–glutamine 105, and glycine 120–glycine 153.

The protein belongs to the Ycf3 family.

It is found in the cellular thylakoid membrane. Functionally, essential for the assembly of the photosystem I (PSI) complex. May act as a chaperone-like factor to guide the assembly of the PSI subunits. This chain is Photosystem I assembly protein Ycf3, found in Prochlorococcus marinus (strain MIT 9303).